Consider the following 365-residue polypeptide: MANKITTFLSGQTGKQISNIDLLNSIRTRASADYQADIPVLEGARINHATVPYQDFQKHANEFFTALVNRIGSTVIKALTYENPLAIFKSETFEFGDTLQEIYVHPAEKKTYDAKSDVSPFKFADTDIEAFYHTLNNENYYERTFERAWIQKAFVSDMAFDEFVDKMFTSLLSSDTLDEYQAVRVYLRNHLRKSLIQTLKGNDKKITVAGTKIDETKQDFVVDFNQSLINLSKRFTIPSRTTFNNPVGVPNMTAIEDQYLVISAEFSTHLDMLLANAFNMDKASVLARTIVVDDFEKFTGEGANNGRKPVAFLISAKSIINKDKLVHMEAIRNPRNMTYNYFYHHHYMTSLSLFENIHFWYVEEA.

Positions 1–48 are excised as a propeptide; the sequence is MANKITTFLSGQTGKQISNIDLLNSIRTRASADYQADIPVLEGARINH.

It localises to the virion. Its function is as follows. Assembles to form an icosahedral capsid. The sequence is that of Major capsid protein (9) from Streptococcus phage Cp-1 (Bacteriophage Cp-1).